We begin with the raw amino-acid sequence, 178 residues long: Large ribosomal subunit protein uL6 (178 aa).

Belongs to the universal ribosomal protein uL6 family. As to quaternary structure, part of the 50S ribosomal subunit.

Its function is as follows. This protein binds to the 23S rRNA, and is important in its secondary structure. It is located near the subunit interface in the base of the L7/L12 stalk, and near the tRNA binding site of the peptidyltransferase center. This Corynebacterium aurimucosum (strain ATCC 700975 / DSM 44827 / CIP 107346 / CN-1) (Corynebacterium nigricans) protein is Large ribosomal subunit protein uL6.